A 351-amino-acid chain; its full sequence is Homeobox-leucine zipper protein HOX23 (351 aa).

A disordered region spans residues 34-128; that stretch reads LQDHAHGGHG…SFESGNKLEP (95 aa). Residues 56-65 show a composition bias toward low complexity; sequence SPFLPDLAMD. The segment at residues 101-160 is a DNA-binding region (homeobox); sequence GGEKKRRLSVEQVRTLERSFESGNKLEPERKAQLARALGLQPRQVAIWFQNRRARWKTKQ. The segment covering 114 to 128 has biased composition (basic and acidic residues); that stretch reads RTLERSFESGNKLEP. The tract at residues 159–203 is leucine-zipper; that stretch reads KQLEKDFDALRRQLDAARAENDALLSLNSKLHAEIVALKGGAAAA. The interval 227 to 263 is disordered; it reads EASCSNRSENSSEINLDISRPAPPPPPPPANESPVNR. Residues 228-240 show a composition bias toward polar residues; sequence ASCSNRSENSSEI. Pro residues predominate over residues 247-257; it reads PAPPPPPPPAN.

Belongs to the HD-ZIP homeobox family. Class I subfamily. In terms of tissue distribution, expressed in seedlings, roots, stems, leaf sheaths and panicles.

It is found in the nucleus. Its function is as follows. Probable transcription factor. The protein is Homeobox-leucine zipper protein HOX23 (HOX23) of Oryza sativa subsp. indica (Rice).